We begin with the raw amino-acid sequence, 76 residues long: Acyl carrier protein (76 aa).

The Carrier domain occupies Met-1–Gln-76. Ser-36 bears the O-(pantetheine 4'-phosphoryl)serine mark.

Belongs to the acyl carrier protein (ACP) family. In terms of processing, 4'-phosphopantetheine is transferred from CoA to a specific serine of apo-ACP by AcpS. This modification is essential for activity because fatty acids are bound in thioester linkage to the sulfhydryl of the prosthetic group.

The protein resides in the cytoplasm. The protein operates within lipid metabolism; fatty acid biosynthesis. Carrier of the growing fatty acid chain in fatty acid biosynthesis. The sequence is that of Acyl carrier protein from Oleidesulfovibrio alaskensis (strain ATCC BAA-1058 / DSM 17464 / G20) (Desulfovibrio alaskensis).